A 190-amino-acid polypeptide reads, in one-letter code: Translation initiation factor IF-3 (190 aa).

A disordered region spans residues 159–190 (QSEVQQKPKREGRNMIMFLSPRKSPLIKKDNE).

Belongs to the IF-3 family. As to quaternary structure, monomer.

Its subcellular location is the cytoplasm. In terms of biological role, IF-3 binds to the 30S ribosomal subunit and shifts the equilibrium between 70S ribosomes and their 50S and 30S subunits in favor of the free subunits, thus enhancing the availability of 30S subunits on which protein synthesis initiation begins. This chain is Translation initiation factor IF-3, found in Prochlorococcus marinus (strain MIT 9215).